The sequence spans 168 residues: Xanthine-guanine phosphoribosyltransferase (168 aa).

Residues 43 to 44 (RG) and 102 to 110 (DDLVDTGAT) each bind 5-phospho-alpha-D-ribose 1-diphosphate. Aspartate 103 serves as a coordination point for Mg(2+). 2 residues coordinate guanine: aspartate 106 and isoleucine 149. Xanthine is bound by residues aspartate 106 and isoleucine 149. GMP-binding positions include 106–110 (DTGAT) and 148–149 (WI).

Belongs to the purine/pyrimidine phosphoribosyltransferase family. XGPT subfamily. In terms of assembly, homotetramer. Mg(2+) is required as a cofactor.

It localises to the cell inner membrane. The catalysed reaction is GMP + diphosphate = guanine + 5-phospho-alpha-D-ribose 1-diphosphate. It carries out the reaction XMP + diphosphate = xanthine + 5-phospho-alpha-D-ribose 1-diphosphate. It catalyses the reaction IMP + diphosphate = hypoxanthine + 5-phospho-alpha-D-ribose 1-diphosphate. It functions in the pathway purine metabolism; GMP biosynthesis via salvage pathway; GMP from guanine: step 1/1. Its pathway is purine metabolism; XMP biosynthesis via salvage pathway; XMP from xanthine: step 1/1. In terms of biological role, purine salvage pathway enzyme that catalyzes the transfer of the ribosyl-5-phosphate group from 5-phospho-alpha-D-ribose 1-diphosphate (PRPP) to the N9 position of the 6-oxopurines guanine and xanthine to form the corresponding ribonucleotides GMP (guanosine 5'-monophosphate) and XMP (xanthosine 5'-monophosphate), with the release of PPi. To a lesser extent, also acts on hypoxanthine. This is Xanthine-guanine phosphoribosyltransferase from Nitrobacter hamburgensis (strain DSM 10229 / NCIMB 13809 / X14).